Reading from the N-terminus, the 524-residue chain is Probable myosin-binding protein 5 (524 aa).

The chain crosses the membrane as a helical span at residues 20-40 (FLIYALLEWILIIILFIDGFL). In terms of domain architecture, GTD-binding spans 299–397 (SILQHLNRQV…ELEAGIEVYR (99 aa)). The stretch at 462 to 490 (SRKDMLVKEISEITERLNAIESKGELLQQ) forms a coiled coil.

Its subcellular location is the membrane. Functionally, probable membrane-anchored myosin receptors. The polypeptide is Probable myosin-binding protein 5 (Arabidopsis thaliana (Mouse-ear cress)).